Here is a 241-residue protein sequence, read N- to C-terminus: Uridylate kinase (241 aa).

Residue 15–18 coordinates ATP; the sequence is KLSG. Residues 23-28 are involved in allosteric activation by GTP; it reads GAEGFG. Position 57 (G57) interacts with UMP. ATP-binding residues include G58 and R62. UMP is bound by residues D77 and 138-145; that span reads TGNPFFTT. The ATP site is built by T165, F171, and D174.

It belongs to the UMP kinase family. Homohexamer.

The protein localises to the cytoplasm. It catalyses the reaction UMP + ATP = UDP + ADP. Its pathway is pyrimidine metabolism; CTP biosynthesis via de novo pathway; UDP from UMP (UMPK route): step 1/1. Allosterically activated by GTP. Inhibited by UTP. In terms of biological role, catalyzes the reversible phosphorylation of UMP to UDP. This is Uridylate kinase from Sodalis glossinidius (strain morsitans).